Here is a 127-residue protein sequence, read N- to C-terminus: Anti-adapter protein IraD (127 aa).

It belongs to the GpW/Gp25 family. IraD subfamily. In terms of assembly, interacts with RssB.

The protein localises to the cytoplasm. Functionally, inhibits RpoS proteolysis by regulating RssB activity, thereby increasing the stability of the sigma stress factor RpoS during oxidative stress. Its effect on RpoS stability is due to its interaction with RssB, which probably blocks the interaction of RssB with RpoS, and the consequent delivery of the RssB-RpoS complex to the ClpXP protein degradation pathway. The sequence is that of Anti-adapter protein IraD from Escherichia coli O6:K15:H31 (strain 536 / UPEC).